Consider the following 220-residue polypeptide: UPF0502 protein PSPPH_2577 (220 aa).

This sequence belongs to the UPF0502 family.

This chain is UPF0502 protein PSPPH_2577, found in Pseudomonas savastanoi pv. phaseolicola (strain 1448A / Race 6) (Pseudomonas syringae pv. phaseolicola (strain 1448A / Race 6)).